The following is a 273-amino-acid chain: Probable ribosomal RNA small subunit methyltransferase A (273 aa).

S-adenosyl-L-methionine is bound by residues N23, L25, G50, E71, D95, and N110.

Belongs to the class I-like SAM-binding methyltransferase superfamily. rRNA adenine N(6)-methyltransferase family. RsmA subfamily.

It is found in the cytoplasm. In terms of biological role, specifically dimethylates two adjacent adenosines in the loop of a conserved hairpin near the 3'-end of 16S rRNA in the 30S particle. May play a critical role in biogenesis of 30S subunits. The chain is Probable ribosomal RNA small subunit methyltransferase A from Thermococcus sibiricus (strain DSM 12597 / MM 739).